Here is a 641-residue protein sequence, read N- to C-terminus: Epstein-Barr nuclear antigen 1 (641 aa).

Residues 1 to 14 (MSDEGPGTGPGNGL) show a composition bias toward gly residues. Disordered regions lie at residues 1-124 (MSDE…AGGA) and 168-478 (GAGA…NPKF). The segment covering 41–50 (RGRGRGRGRG) has biased composition (basic residues). 3 stretches are compositionally biased toward gly residues: residues 51–62 (GGRPGAPGGSGS), 84–124 (GAHG…AGGA), and 168–352 (GAGA…GSGG). The segment at 325–376 (GGGGRGRGGSGGRGRGGSGGRGRGGSGGRRGRGRERARGRSRERARGRGRGR) is interaction with host C1QBP/P32. The chromosome-tethering GR2 stretch occupies residues 328–378 (GRGRGGSGGRGRGGSGGRGRGGSGGRRGRGRERARGRSRERARGRGRGRGE). Over residues 358-381 (RERARGRSRERARGRGRGRGEKRP) the composition is skewed to basic and acidic residues. Residues 379-386 (KRPRSPSS) form a nuclear localization signal region. Positions 383 to 394 (SPSSQSSSSGSP) are enriched in low complexity. 2 positions are modified to phosphoserine: S385 and S393. The segment at 387–395 (QSSSSGSPP) is interaction with host CSNK2B. An interaction with host USP7 region spans residues 436-450 (QGPTDDPGEGPSTGP). The DBD/DD stretch occupies residues 452-607 (GQGDGGRRKK…CSFDDGVDLP (156 aa)). Positions 458-470 (RRKKGGWFGKHRG) are enriched in basic residues. Residues K460, K461, and Y518 each contribute to the DNA site. The active-site For site-specific DNA cleavage activity is Y518. The interval 612 to 641 (PMVEGAAAEGDDGDDGDEGGDGDEGEEGQE) is disordered. Positions 620 to 641 (EGDDGDDGDEGGDGDEGEEGQE) are enriched in acidic residues.

Belongs to the herpesviridae EBNA1 family. In terms of assembly, homodimer. Dimers can assemble into higher-order oligomers like a homohexamer. Binding to the DS element involves 2 dimers of EBNA1. Interacts with human USP7; this interaction is independent and simultaneous to EBNA1 interaction with CSNK2B as well as necessary for PML nuclear bodies disruption by EBNA1. Interacts with host CSNK2B (via KSSR motif); the interaction requires phosphorylation of EBNA1, is independent and simultaneous to EBNA1 interaction with USP7 as well as necessary for PML nuclear bodies disruption by EBNA1. EBNA1, USP7 and CSNK2B form a ternary complex. EBNA1, USP7 and CSNK2B form a ternary complex. Interacts with human EBP2; it is not clear if this interaction is linked with the ability of EBNA1 to associate with host mitotic chromosomes. Interacts with BGLF4; this interaction facilitates the switch from latent to lytic DNA replication by down-regulating EBNA1 replication function. Interacts with human PAX5; this interaction promotes EBNA1-dependent transcription. Interacts with host KPNA1/Importin subunit alpha-5; this interaction allows the nuclear import of EBNA1. Interacts with host KPNA2/Importin subunit alpha-1; this interaction allows the nuclear import of EBNA1. Interacts with host C1QBP/P32. Interacts with host BIRC5/Survivin; this interaction is probably important for EBV episome maintenance in Burkitt's lymphoma host cells. Phosphorylation at Ser-385 increases the nuclear import efficiency of EBNA1. In terms of processing, phosphorylation at Ser-393 is required for interaction with CSNK2B.

It localises to the host nucleus. Functionally, responsible for the origin of replication (oriP) dependent replication and maintenance of viral episomes during latent infection. EBNA1 dimer interacts with the DS (dyad symmetry) element within the origin of replication oriP and with a host mitotic chromosome to initiate viral DNA replication during latency. EBNA1 binding to DS recruits the host origin recognition complex (ORC). Governs the faithful mitotic segregation of the viral episomes by binding both the FR (family of repeats) element within oriP and the host mitotic chromosomes. Forms a cell cycle-dependent tyrosine-dependent DNA cross-link and single-strand cleavage at oriP required for terminating replication and maintaining viral episomes. Counteracts the stabilization of host p53/TP53 by host USP7, thereby decreasing apoptosis and increasing host cell survival. Induces degradation of host PML through the ubiquitin-proteasome system, which promotes lytic reactivation and may impair the host cell DNA repair. Increases the association of CK2 with PML proteins which increases the phosphorylation of PML proteins by CK2, triggering the polyubiquitylation and degradation of PML. Displays inhibitory effects on a SUMO2-modified complex that includes STUB1, KAP1 and USP7. This inhibitory effect possibly participates to the maintenance of latency linked to PML silencing. The chain is Epstein-Barr nuclear antigen 1 (EBNA1) from Epstein-Barr virus (strain GD1) (HHV-4).